A 785-amino-acid chain; its full sequence is Toll-like receptor 2 (785 aa).

The first 17 residues, 1–17 (MSRVLWTLWVLGAVTNL), serve as a signal peptide directing secretion. The Extracellular portion of the chain corresponds to 18–589 (SKEEAPDQSS…RLSVSECHRT (572 aa)). Cysteines 31 and 37 form a disulfide. LRR repeat units lie at residues 54–77 (AVRSLDLSNNEITYIGNSDLRDCV), 78–101 (NLKALRLESNGINTIEEESFLSLW), 102–125 (SLEHLDLSYNLLSNLSSSWFRPLS), 126–150 (SLKFLNLLGNPYKSLGETPLFSQLT), 151–175 (NLRILKVGNIYSFTEIQDKDFAGLT), 176–199 (FLEELEIDASNLQRYEPKSLKSIQ), 200–223 (NISYLALRMKQPVLLVEIFVDLSS), 224–250 (SLKHLELRDTHLDTFHFSEASINETHT), 251–278 (LVKKWTFRNVKVTDRSFTGVVRLLNYVS), 279–308 (GVLEVEFEDCTLYGLGDFDIPDVDKIKNIG), 309–337 (QIETLTVRRLHIPHFYSFYDMSSIYSLTE), 338–361 (DVKRITVENSKVFLVPCLLSQHLK), 362–388 (SLEYLDLSENLMVEEYLKNSACEDAWP), 389–414 (SLQTLVLRQNHLASLERTGETLLTLK), 415–437 (NLTNIDISKNSFHSMPETCQWPE), 438–457 (KMKYLNLSSTRIHSVTGCIP), 458–478 (KTLEILDVSNNNLNLFSLNLP), 479–500 (QLKELYISRNKLMTLPDASLLP), and 501–524 (MLLVLKISRNAITTFSKEQLDSFH). The N-linked (GlcNAc...) asparagine glycan is linked to asparagine 115. 2 N-linked (GlcNAc...) asparagine glycosylation sites follow: asparagine 200 and asparagine 246. A disulfide bridge links cysteine 354 with cysteine 383. N-linked (GlcNAc...) asparagine glycosylation is found at asparagine 415 and asparagine 443. Cysteine 433 and cysteine 455 are joined by a disulfide. Positions 525-579 (TLKTLEAGGNNFICSCEFLSFTQEQQALAKVLIDWPANYLCDSPSHVRGQQVQDV) constitute an LRRCT domain. A helical membrane pass occupies residues 590 to 610 (ALVSGMCCALFLLILLTEVLC). The Cytoplasmic portion of the chain corresponds to 611 to 785 (HRFHGLWYMR…WLNLRTAIKS (175 aa)). Residues 640 to 783 (VCYDAFVSYS…GFWLNLRTAI (144 aa)) enclose the TIR domain. A Glycyl lysine isopeptide (Lys-Gly) (interchain with G-Cter in ubiquitin) cross-link involves residue lysine 755. The short motif at 762 to 779 (YLEWPTDDAQQEGFWLNL) is the ATG16L1-binding motif element.

The protein belongs to the Toll-like receptor family. Interacts with LY96, TLR1 and TLR6 (via extracellular domain). TLR2 seems to exist in heterodimers with either TLR1 or TLR6 before stimulation by the ligand. The heterodimers form bigger oligomers in response to their corresponding ligands as well as further heterotypic associations with other receptors such as CD14 and/or CD36. Binds MYD88 (via TIR domain). Interacts with TICAM1. Interacts with CNPY3. Interacts with ATG16L1. Interacts with PPP1R11. Interacts with TICAM2. Interacts with TIRAP. Ubiquitinated at Lys-755 by PPP1R11, leading to its degradation. Deubiquitinated by USP2. Post-translationally, glycosylation of Asn-443 is critical for secretion of the N-terminal ectodomain of TLR2.

The protein resides in the membrane. The protein localises to the cytoplasmic vesicle. It is found in the phagosome membrane. Its subcellular location is the membrane raft. Its function is as follows. Cooperates with LY96 to mediate the innate immune response to bacterial lipoproteins and other microbial cell wall components. Cooperates with TLR1 or TLR6 to mediate the innate immune response to bacterial lipoproteins or lipopeptides. Acts via MYD88 and TRAF6, leading to NF-kappa-B activation, cytokine secretion and the inflammatory response. May also promote apoptosis in response to lipoproteins. Forms activation clusters composed of several receptors depending on the ligand, these clusters trigger signaling from the cell surface and subsequently are targeted to the Golgi in a lipid-raft dependent pathway. Forms the cluster TLR2:TLR6:CD14:CD36 in response to diacylated lipopeptides and TLR2:TLR1:CD14 in response to triacylated lipopeptides. This chain is Toll-like receptor 2 (TLR2), found in Canis lupus familiaris (Dog).